The sequence spans 249 residues: 3-deoxy-D-manno-octulosonic acid kinase (249 aa).

Aspartate 175 is an active-site residue.

It belongs to the protein kinase superfamily. KdkA/RfaP family.

Its subcellular location is the cell inner membrane. The enzyme catalyses an alpha-Kdo-(2-&gt;6)-lipid IVA + ATP = a 4-O-phospho-alpha-Kdo-(2-&gt;6)-lipid IVA + ADP + H(+). It functions in the pathway bacterial outer membrane biogenesis; LPS core biosynthesis. Functionally, catalyzes the ATP-dependent phosphorylation of the 3-deoxy-D-manno-octulosonic acid (Kdo) residue in Kdo-lipid IV(A) at the 4-OH position. This Xanthomonas campestris pv. campestris (strain 8004) protein is 3-deoxy-D-manno-octulosonic acid kinase.